The sequence spans 284 residues: Homeobox protein six1 (284 aa).

Residues 124-183 (GEETSYCFKEKSRGVLREWYAHNPYPSPREKRELAEATGLTTTQVSNWFKNRRQRDRAAE) constitute a DNA-binding region (homeobox). Residues 168–230 (VSNWFKNRRQ…SPPQSPDQNS (63 aa)) form a disordered region. The span at 179-190 (DRAAEAKERENT) shows a compositional bias: basic and acidic residues. Low complexity predominate over residues 191–202 (ENNNTSTNKQNQ).

Belongs to the SIX/Sine oculis homeobox family.

The protein localises to the nucleus. The protein resides in the cytoplasm. In terms of biological role, transcription factor that is involved in the regulation of cell proliferation, apoptosis and embryonic development. Depending on context, functions as a transcriptional repressor or activator. Required for the normal formation of pre-placodal ectoderm. The sequence is that of Homeobox protein six1 (six1) from Xenopus laevis (African clawed frog).